The chain runs to 1162 residues: DNA-directed RNA polymerase subunit beta 1 (1162 aa).

It belongs to the RNA polymerase beta chain family. The RNAP catalytic core consists of 2 alpha, 1 beta, 1 beta' and 1 omega subunit. When a sigma factor is associated with the core the holoenzyme is formed, which can initiate transcription.

It carries out the reaction RNA(n) + a ribonucleoside 5'-triphosphate = RNA(n+1) + diphosphate. In terms of biological role, DNA-dependent RNA polymerase catalyzes the transcription of DNA into RNA using the four ribonucleoside triphosphates as substrates. The protein is DNA-directed RNA polymerase subunit beta 1 of Nocardia farcinica (strain IFM 10152).